We begin with the raw amino-acid sequence, 686 residues long: Methionine--tRNA ligase (686 aa).

Positions 15–25 (PYANGSIHLGH) match the 'HIGH' region motif. Residues C146, C149, C159, and C162 each contribute to the Zn(2+) site. Residues 332–336 (KMSKS) carry the 'KMSKS' region motif. K335 is an ATP binding site. Residues 585 to 686 (AFAAVDMRIA…EGAQPGMRVM (102 aa)) form the tRNA-binding domain.

This sequence belongs to the class-I aminoacyl-tRNA synthetase family. MetG type 1 subfamily. As to quaternary structure, homodimer. Zn(2+) serves as cofactor.

It is found in the cytoplasm. It catalyses the reaction tRNA(Met) + L-methionine + ATP = L-methionyl-tRNA(Met) + AMP + diphosphate. In terms of biological role, is required not only for elongation of protein synthesis but also for the initiation of all mRNA translation through initiator tRNA(fMet) aminoacylation. The protein is Methionine--tRNA ligase of Vibrio campbellii (strain ATCC BAA-1116).